Reading from the N-terminus, the 341-residue chain is L-threonine 3-dehydrogenase (341 aa).

Cys38 serves as a coordination point for Zn(2+). Active-site charge relay system residues include Thr40 and His43. Residues His63, Glu64, Cys93, Cys96, Cys99, and Cys107 each coordinate Zn(2+). NAD(+)-binding positions include Ile175, Asp195, Arg200, 262–264, and 286–287; these read LGI and IY.

It belongs to the zinc-containing alcohol dehydrogenase family. In terms of assembly, homotetramer. Zn(2+) serves as cofactor.

The protein resides in the cytoplasm. The catalysed reaction is L-threonine + NAD(+) = (2S)-2-amino-3-oxobutanoate + NADH + H(+). It participates in amino-acid degradation; L-threonine degradation via oxydo-reductase pathway; glycine from L-threonine: step 1/2. Its function is as follows. Catalyzes the NAD(+)-dependent oxidation of L-threonine to 2-amino-3-ketobutyrate. This is L-threonine 3-dehydrogenase from Salmonella gallinarum (strain 287/91 / NCTC 13346).